The chain runs to 1079 residues: Spermatogenesis-associated protein 31G1 (1079 aa).

Disordered stretches follow at residues 97 to 145, 261 to 281, 297 to 317, 331 to 362, 376 to 412, 506 to 566, 637 to 678, and 840 to 975; these read EVEE…GSEG, EDLE…SPSV, GVLS…LEVL, KMPQ…EGGL, EKPQ…RYKP, NLWA…SPPP, VPVF…EQRK, and PHSS…NHPA. Positions 98–113 are enriched in acidic residues; the sequence is VEEEGEEEEEGEDEAS. Positions 336-345 are enriched in pro residues; sequence FEPPMPPPCQ. The span at 398-412 shows a compositional bias: basic and acidic residues; sequence LQRESSLEDPSRYKP. Low complexity-rich tracts occupy residues 551–562 and 645–655; these read NSSASRSPSLAL and SSPSSNSVSKS. Over residues 669 to 678 the composition is skewed to basic and acidic residues; that stretch reads PDGEAVEQRK. The segment covering 942-951 has biased composition (basic residues); that stretch reads AKKREHPRKP.

Functionally, dispensable for normal development and fertility. The chain is Spermatogenesis-associated protein 31G1 from Homo sapiens (Human).